Consider the following 382-residue polypeptide: Putative acetyl-CoA C-acetyltransferase VraB (382 aa).

Cysteine 86 (acyl-thioester intermediate) is an active-site residue. The Proton acceptor role is filled by histidine 338.

It belongs to the thiolase-like superfamily. Thiolase family.

This chain is Putative acetyl-CoA C-acetyltransferase VraB (vraB), found in Staphylococcus epidermidis (strain ATCC 12228 / FDA PCI 1200).